Reading from the N-terminus, the 430-residue chain is Xaa-Pro aminopeptidase (430 aa).

D254, D265, H348, E377, and E400 together coordinate Mn(2+).

It belongs to the peptidase M24B family. In terms of assembly, homotetramer. Mn(2+) serves as cofactor.

The catalysed reaction is Release of any N-terminal amino acid, including proline, that is linked to proline, even from a dipeptide or tripeptide.. The protein is Xaa-Pro aminopeptidase (pepP) of Haemophilus influenzae (strain ATCC 51907 / DSM 11121 / KW20 / Rd).